We begin with the raw amino-acid sequence, 157 residues long: Xanthine-guanine phosphoribosyltransferase (157 aa).

5-phospho-alpha-D-ribose 1-diphosphate contacts are provided by residues 42 to 43 (RG) and 93 to 101 (DDLVDTGNT). Asp94 provides a ligand contact to Mg(2+). Guanine is bound by residues Asp97 and Ile140. The xanthine site is built by Asp97 and Ile140. Residues 97–101 (DTGNT) and 139–140 (WI) each bind GMP.

The protein belongs to the purine/pyrimidine phosphoribosyltransferase family. XGPT subfamily. As to quaternary structure, homotetramer. Mg(2+) serves as cofactor.

The protein localises to the cell inner membrane. The catalysed reaction is GMP + diphosphate = guanine + 5-phospho-alpha-D-ribose 1-diphosphate. It catalyses the reaction XMP + diphosphate = xanthine + 5-phospho-alpha-D-ribose 1-diphosphate. It carries out the reaction IMP + diphosphate = hypoxanthine + 5-phospho-alpha-D-ribose 1-diphosphate. The protein operates within purine metabolism; GMP biosynthesis via salvage pathway; GMP from guanine: step 1/1. Its pathway is purine metabolism; XMP biosynthesis via salvage pathway; XMP from xanthine: step 1/1. Purine salvage pathway enzyme that catalyzes the transfer of the ribosyl-5-phosphate group from 5-phospho-alpha-D-ribose 1-diphosphate (PRPP) to the N9 position of the 6-oxopurines guanine and xanthine to form the corresponding ribonucleotides GMP (guanosine 5'-monophosphate) and XMP (xanthosine 5'-monophosphate), with the release of PPi. To a lesser extent, also acts on hypoxanthine. The sequence is that of Xanthine-guanine phosphoribosyltransferase from Actinobacillus pleuropneumoniae serotype 5b (strain L20).